Consider the following 836-residue polypeptide: Envelope glycoprotein gp160 (836 aa).

The N-terminal stretch at Met-1 to Asp-21 is a signal peptide. Over Pro-22–Ile-656 the chain is Extracellular. A disulfide bond links Cys-43 and Cys-63. 19 N-linked (GlcNAc...) asparagine; by host glycosylation sites follow: Asn-77, Asn-121, Asn-130, Asn-134, Asn-146, Asn-150, Asn-180, Asn-189, Asn-224, Asn-228, Asn-233, Asn-254, Asn-276, Asn-282, Asn-288, Asn-318, Asn-328, Asn-340, and Asn-341. 5 disulfide bridges follow: Cys-108-Cys-197, Cys-115-Cys-188, Cys-120-Cys-147, Cys-210-Cys-239, and Cys-220-Cys-231. Residues Cys-120–Asn-146 form a V1 region. A V2 region spans residues Cys-147–Cys-188. Residues Cys-283 to Tyr-316 form a V3 region. The cysteines at positions 283 and 317 are disulfide-linked. The interval Lys-349–Leu-359 is CD4-binding loop. 2 disulfide bridges follow: Cys-363–Cys-418 and Cys-370–Cys-391. The V4 stretch occupies residues Cys-370 to Cys-391. 6 N-linked (GlcNAc...) asparagine; by host glycosylation sites follow: Asn-371, Asn-377, Asn-381, Asn-384, Asn-415, and Asn-435. The tract at residues Gly-434–Ser-441 is V5. The fusion peptide stretch occupies residues Ala-482–Ala-503. Residues Lys-545–Ile-563 form an immunosuppression region. Cys-569 and Cys-575 are disulfide-bonded. Residues Asn-582, Asn-588, Asn-597, and Asn-609 are each glycosylated (N-linked (GlcNAc...) asparagine; by host). A coiled-coil region spans residues Arg-605–Ala-639. The segment at Glu-634 to Lys-655 is MPER; binding to GalCer. The chain crosses the membrane as a helical span at residues Ala-657–Ile-677. The Cytoplasmic portion of the chain corresponds to Ala-678 to Leu-836. Residues Tyr-684–Leu-687 carry the YXXL motif; contains endocytosis signal motif. Residues Ala-696 to Arg-715 are disordered. A Di-leucine internalization motif motif is present at residues Leu-835–Leu-836.

Belongs to the HIV-1 env protein family. The mature envelope protein (Env) consists of a homotrimer of non-covalently associated gp120-gp41 heterodimers. The resulting complex protrudes from the virus surface as a spike. There seems to be as few as 10 spikes on the average virion. Interacts with host CD4, CCR5 and CXCR4. Gp120 also interacts with the C-type lectins CD209/DC-SIGN and CLEC4M/DC-SIGNR (collectively referred to as DC-SIGN(R)). Gp120 and gp41 interact with GalCer. Gp120 interacts with host ITGA4/ITGB7 complex; on CD4+ T-cells, this interaction results in rapid activation of integrin ITGAL/LFA-1, which facilitates efficient cell-to-cell spreading of HIV-1. Gp120 interacts with cell-associated heparan sulfate; this interaction increases virus infectivity on permissive cells and may be involved in infection of CD4- cells. As to quaternary structure, the mature envelope protein (Env) consists of a homotrimer of non-covalently associated gp120-gp41 heterodimers. The resulting complex protrudes from the virus surface as a spike. There seems to be as few as 10 spikes on the average virion. Highly glycosylated by host. The high number of glycan on the protein is reffered to as 'glycan shield' because it contributes to hide protein sequence from adaptive immune system. Post-translationally, palmitoylation of the transmembrane protein and of Env polyprotein (prior to its proteolytic cleavage) is essential for their association with host cell membrane lipid rafts. Palmitoylation is therefore required for envelope trafficking to classical lipid rafts, but not for viral replication. In terms of processing, specific enzymatic cleavages in vivo yield mature proteins. Envelope glycoproteins are synthesized as an inactive precursor that is heavily N-glycosylated and processed likely by host cell furin in the Golgi to yield the mature SU and TM proteins. The cleavage site between SU and TM requires the minimal sequence [KR]-X-[KR]-R. About 2 of the 9 disulfide bonds of gp41 are reduced by P4HB/PDI, following binding to CD4 receptor.

The protein localises to the virion membrane. Its subcellular location is the host cell membrane. It is found in the host endosome membrane. Functionally, oligomerizes in the host endoplasmic reticulum into predominantly trimers. In a second time, gp160 transits in the host Golgi, where glycosylation is completed. The precursor is then proteolytically cleaved in the trans-Golgi and thereby activated by cellular furin or furin-like proteases to produce gp120 and gp41. Attaches the virus to the host lymphoid cell by binding to the primary receptor CD4. This interaction induces a structural rearrangement creating a high affinity binding site for a chemokine coreceptor like CXCR4 and/or CCR5. Acts as a ligand for CD209/DC-SIGN and CLEC4M/DC-SIGNR, which are respectively found on dendritic cells (DCs), and on endothelial cells of liver sinusoids and lymph node sinuses. These interactions allow capture of viral particles at mucosal surfaces by these cells and subsequent transmission to permissive cells. HIV subverts the migration properties of dendritic cells to gain access to CD4+ T-cells in lymph nodes. Virus transmission to permissive T-cells occurs either in trans (without DCs infection, through viral capture and transmission), or in cis (following DCs productive infection, through the usual CD4-gp120 interaction), thereby inducing a robust infection. In trans infection, bound virions remain infectious over days and it is proposed that they are not degraded, but protected in non-lysosomal acidic organelles within the DCs close to the cell membrane thus contributing to the viral infectious potential during DCs' migration from the periphery to the lymphoid tissues. On arrival at lymphoid tissues, intact virions recycle back to DCs' cell surface allowing virus transmission to CD4+ T-cells. Its function is as follows. Acts as a class I viral fusion protein. Under the current model, the protein has at least 3 conformational states: pre-fusion native state, pre-hairpin intermediate state, and post-fusion hairpin state. During fusion of viral and target intracellular membranes, the coiled coil regions (heptad repeats) assume a trimer-of-hairpins structure, positioning the fusion peptide in close proximity to the C-terminal region of the ectodomain. The formation of this structure appears to drive apposition and subsequent fusion of viral and target cell membranes. Complete fusion occurs in host cell endosomes and is dynamin-dependent, however some lipid transfer might occur at the plasma membrane. The virus undergoes clathrin-dependent internalization long before endosomal fusion, thus minimizing the surface exposure of conserved viral epitopes during fusion and reducing the efficacy of inhibitors targeting these epitopes. Membranes fusion leads to delivery of the nucleocapsid into the cytoplasm. The chain is Envelope glycoprotein gp160 from Human immunodeficiency virus type 1 group N (isolate YBF106) (HIV-1).